Consider the following 486-residue polypeptide: Cysteine--tRNA ligase (486 aa).

Cys29 lines the Zn(2+) pocket. Residues 31-41 carry the 'HIGH' region motif; it reads VTVYDYCHLGH. Residues Cys214, His239, and Glu243 each coordinate Zn(2+). The 'KMSKS' region signature appears at 271–275; sequence KMSKS. Residue Lys274 coordinates ATP.

The protein belongs to the class-I aminoacyl-tRNA synthetase family. In terms of assembly, monomer. Zn(2+) is required as a cofactor.

The protein localises to the cytoplasm. The catalysed reaction is tRNA(Cys) + L-cysteine + ATP = L-cysteinyl-tRNA(Cys) + AMP + diphosphate. This chain is Cysteine--tRNA ligase, found in Nostoc sp. (strain PCC 7120 / SAG 25.82 / UTEX 2576).